The sequence spans 284 residues: Bifunctional protein FolD (284 aa).

NADP(+)-binding positions include 165–167 and serine 190; that span reads GRS.

The protein belongs to the tetrahydrofolate dehydrogenase/cyclohydrolase family. As to quaternary structure, homodimer.

It catalyses the reaction (6R)-5,10-methylene-5,6,7,8-tetrahydrofolate + NADP(+) = (6R)-5,10-methenyltetrahydrofolate + NADPH. The enzyme catalyses (6R)-5,10-methenyltetrahydrofolate + H2O = (6R)-10-formyltetrahydrofolate + H(+). It participates in one-carbon metabolism; tetrahydrofolate interconversion. In terms of biological role, catalyzes the oxidation of 5,10-methylenetetrahydrofolate to 5,10-methenyltetrahydrofolate and then the hydrolysis of 5,10-methenyltetrahydrofolate to 10-formyltetrahydrofolate. This chain is Bifunctional protein FolD, found in Streptococcus equi subsp. zooepidemicus (strain H70).